Reading from the N-terminus, the 578-residue chain is Acyl-CoA ligase AFT1-1 (578 aa).

ATP contacts are provided by residues 210–218 (SSGTSGAQK), 350–355 (QCYGAT), Asp438, Arg457, and Lys554. The SBD1 stretch occupies residues 281–350 (GVEDLLSIVE…RHHPTWKIKQ (70 aa)). The segment at 351 to 413 (CYGATEAGTA…VSSPSLAIGY (63 aa)) is SBD2. Residues 576–578 (SKI) carry the Peroxisomal targeting signal type 1 motif.

This sequence belongs to the ATP-dependent AMP-binding enzyme family.

The protein localises to the peroxisome. It functions in the pathway mycotoxin biosynthesis. Its function is as follows. Acyl-CoA ligase; part of the gene clusters that mediate the biosynthesis of the host-selective toxins (HSTs) AF-toxins responsible for Alternaria black spot of strawberry disease by the strawberry pathotype. AF-toxin I and III are valine derivatives of 2,3-dyhydroxy-isovaleric acid and 2-hydroxy-isovaleric acid respectively, while AF II is an isoleucine derivative of 2-hydroxy-valeric acid. These derivatives are bound to a 9,10-epoxy-8-hydroxy-9-methyl-decatrienoic acid (EDA) moiety. On cellular level, AF-toxins affect plasma membrane of susceptible cells and cause a sudden increase in loss of K(+) after a few minutes of toxin treatment. The aldo-keto reductase AFTS1 catalyzes the conversion of 2-keto-isovaleric acid (2-KIV) to 2-hydroxy-isovaleric acid (2-HIV) by reduction of its ketone to an alcohol. The acyl-CoA ligase AFT1, the hydrolase AFT2 and the enoyl-CoA hydratases AFT3 and AFT6, but also the polyketide synthase AFT9, the acyl-CoA dehydrogenase AFT10, the cytochrome P450 monooxygenase AFT11 and the oxidoreductase AFT12 are all involved in the biosynthesis of the AK-, AF- and ACT-toxin common EDA structural moiety. The exact role of each enzyme, and of additional enzymes identified within the AF-toxin clusters have still to be determined. The polypeptide is Acyl-CoA ligase AFT1-1 (Alternaria alternata (Alternaria rot fungus)).